The following is a 283-amino-acid chain: Nucleoid occlusion protein (283 aa).

Residues 1–26 (MKQPFSRLFGFGDKQDQEMETGKQEE) are disordered. Positions 13 to 26 (DKQDQEMETGKQEE) are enriched in basic and acidic residues. Positions 143–162 (ESLAQRLGKGQSTIANKLRL) form a DNA-binding region, H-T-H motif.

This sequence belongs to the ParB family.

The protein resides in the cytoplasm. Its subcellular location is the nucleoid. In terms of biological role, effects nucleoid occlusion by binding relatively nonspecifically to DNA and preventing the assembly of the division machinery in the vicinity of the nucleoid, especially under conditions that disturb the cell cycle. It helps to coordinate cell division and chromosome segregation by preventing the formation of the Z ring through the nucleoid, which would cause chromosome breakage. This chain is Nucleoid occlusion protein, found in Halalkalibacterium halodurans (strain ATCC BAA-125 / DSM 18197 / FERM 7344 / JCM 9153 / C-125) (Bacillus halodurans).